Here is a 355-residue protein sequence, read N- to C-terminus: Protein RecA (355 aa).

66–73 (GPESSGKT) lines the ATP pocket. A disordered region spans residues 331 to 355 (DVPEEDLPTTEDEQINILPDDSTEE). Positions 332–344 (VPEEDLPTTEDEQ) are enriched in acidic residues.

This sequence belongs to the RecA family.

Its subcellular location is the cytoplasm. Functionally, can catalyze the hydrolysis of ATP in the presence of single-stranded DNA, the ATP-dependent uptake of single-stranded DNA by duplex DNA, and the ATP-dependent hybridization of homologous single-stranded DNAs. It interacts with LexA causing its activation and leading to its autocatalytic cleavage. In Latilactobacillus sakei subsp. sakei (strain 23K) (Lactobacillus sakei subsp. sakei), this protein is Protein RecA.